A 357-amino-acid chain; its full sequence is Acyl-coenzyme A:6-aminopenicillanic-acid-acyltransferase 40 kDa form (357 aa).

Residues aspartate 121 and arginine 310 each contribute to the 6-aminopenicillanate site.

It belongs to the peptidase C45 family. The active form of the enzyme results from processing of the 40-kDa monomeric precursor to a heterodimer containing subunits of 11 and 29 kDa. In terms of processing, the pre-AAT protein is synthesized as 40 kDa precursor which is then self-processed into an 11 kDa (protein A) and a 29 kDa (protein B). The B protein carries AAT activity.

The protein localises to the peroxisome matrix. The enzyme catalyses isopenicillin N + phenylacetyl-CoA + H2O = penicillin G + L-2-aminoadipate + CoA + H(+). It functions in the pathway antibiotic biosynthesis; penicillin G biosynthesis; penicillin G from L-alpha-aminoadipate and L-cysteine and L-valine: step 3/3. In terms of biological role, nonribosomal peptide synthetase; part of the gene cluster that mediates the biosynthesis of penicillin, the world's most important antibiotic. AatA catalyzes the exchange of the alpha-aminoadipyl side chain of isopenicillin N for phenylacetic acid to yield penicillin. This step occurs in the peroxisomal matrix and the penM and paaT transporters are involved in the isopenicillin N and phenylacetic acid import into the peroxisome, respectively. The penicillin biosynthesis occurs via 3 enzymatic steps, the first corresponding to the production of the tripeptide N-[(5S)-5-amino-5-carboxypentanoyl]-L-cysteinyl-D-valine (LLD-ACV or ACV) by the NRPS acvA. The tripeptide ACV is then cyclized to isopenicillin N (IPN) by the isopenicillin N synthase ipnA that forms the beta-lactam nucleus. Finally, the alpha-aminoadipyl side chain is exchanged for phenylacetic acid by the isopenicillin N acyltransferase penDE to yield penicillin in the peroxisomal matrix. This chain is Acyl-coenzyme A:6-aminopenicillanic-acid-acyltransferase 40 kDa form, found in Emericella nidulans (strain FGSC A4 / ATCC 38163 / CBS 112.46 / NRRL 194 / M139) (Aspergillus nidulans).